The primary structure comprises 119 residues: Neuropeptide B (119 aa).

A signal peptide spans 1–21; that stretch reads MVRCRTLVAAALALLLTPALA. Positions 53–119 are excised as a propeptide; the sequence is SESPALRVGT…SLHKAECQSA (67 aa).

Belongs to the neuropeptide B/W family. In terms of tissue distribution, detected in a variety of tissues. High levels are found in the lymphoid organs, central nervous system, mammary gland and uterus.

It is found in the secreted. May be involved in the regulation of feeding, neuroendocrine system, memory and learning. May be involved in the afferent pain pathway. This Rattus norvegicus (Rat) protein is Neuropeptide B (Npb).